The primary structure comprises 88 residues: Small ribosomal subunit protein uS15 (88 aa).

The protein belongs to the universal ribosomal protein uS15 family. As to quaternary structure, part of the 30S ribosomal subunit. Forms a bridge to the 50S subunit in the 70S ribosome, contacting the 23S rRNA.

Its function is as follows. One of the primary rRNA binding proteins, it binds directly to 16S rRNA where it helps nucleate assembly of the platform of the 30S subunit by binding and bridging several RNA helices of the 16S rRNA. Functionally, forms an intersubunit bridge (bridge B4) with the 23S rRNA of the 50S subunit in the ribosome. This is Small ribosomal subunit protein uS15 from Mesoplasma florum (strain ATCC 33453 / NBRC 100688 / NCTC 11704 / L1) (Acholeplasma florum).